The sequence spans 399 residues: Elongation factor Tu (399 aa).

The tr-type G domain occupies 10-209; that stretch reads KPHVNIGTIG…EVDAYIPTPE (200 aa). Positions 19–26 are G1; it reads GHVDHGKT. 19 to 26 is a binding site for GTP; sequence GHVDHGKT. Thr-26 lines the Mg(2+) pocket. The segment at 60–64 is G2; the sequence is GITIA. The interval 81-84 is G3; that stretch reads DCPG. GTP-binding positions include 81 to 85 and 136 to 139; these read DCPGH and NKQD. The G4 stretch occupies residues 136-139; that stretch reads NKQD. The interval 174 to 176 is G5; sequence SAL.

This sequence belongs to the TRAFAC class translation factor GTPase superfamily. Classic translation factor GTPase family. EF-Tu/EF-1A subfamily. In terms of assembly, monomer.

It is found in the cytoplasm. The enzyme catalyses GTP + H2O = GDP + phosphate + H(+). Functionally, GTP hydrolase that promotes the GTP-dependent binding of aminoacyl-tRNA to the A-site of ribosomes during protein biosynthesis. The polypeptide is Elongation factor Tu (Helicobacter pylori (strain G27)).